The chain runs to 202 residues: FMN-dependent NADH:quinone oxidoreductase 1 (202 aa).

Residues Ser-9, 15–17 (SAS), 95–98 (MYNF), and 139–142 (TSGG) contribute to the FMN site.

Belongs to the azoreductase type 1 family. As to quaternary structure, homodimer. FMN serves as cofactor.

It carries out the reaction 2 a quinone + NADH + H(+) = 2 a 1,4-benzosemiquinone + NAD(+). The catalysed reaction is N,N-dimethyl-1,4-phenylenediamine + anthranilate + 2 NAD(+) = 2-(4-dimethylaminophenyl)diazenylbenzoate + 2 NADH + 2 H(+). In terms of biological role, quinone reductase that provides resistance to thiol-specific stress caused by electrophilic quinones. Functionally, also exhibits azoreductase activity. Catalyzes the reductive cleavage of the azo bond in aromatic azo compounds to the corresponding amines. This chain is FMN-dependent NADH:quinone oxidoreductase 1, found in Pseudomonas syringae pv. tomato (strain ATCC BAA-871 / DC3000).